Here is a 1925-residue protein sequence, read N- to C-terminus: Plexin-D1 (1925 aa).

The segment covering 1 to 18 (MAPRAAGGAPLSARAAAA) has biased composition (low complexity). The segment at 1 to 23 (MAPRAAGGAPLSARAAAASPPPF) is disordered. Positions 1-46 (MAPRAAGGAPLSARAAAASPPPFQTPPRCPVPLLLLLLLGAARAGA) are cleaved as a signal peptide. A Sema domain is found at 47–546 (LEIQRRFPSP…TSHQMARVKV (500 aa)). The Extracellular segment spans residues 47–1271 (LEIQRRFPSP…TLQLGGSETA (1225 aa)). N-linked (GlcNAc...) asparagine glycosylation is present at N86. 2 cysteine pairs are disulfide-bonded: C104/C114 and C140/C148. N155, N188, and N224 each carry an N-linked (GlcNAc...) asparagine glycan. Cystine bridges form between C322–C445 and C345–C389. N-linked (GlcNAc...) asparagine glycans are attached at residues N481 and N500. Cystine bridges form between C549-C566, C555-C600, C558-C575, C569-C581, and C637-C661. N583 carries an N-linked (GlcNAc...) asparagine glycan. Residues N696, N736, N802, N965, N1017, N1060, N1099, N1118, N1132, N1237, and N1257 are each glycosylated (N-linked (GlcNAc...) asparagine). IPT/TIG domains lie at 891-979 (PEIH…FSYV), 981-1066 (PLVH…FWYM), and 1069-1160 (PVIT…LDPE). The chain crosses the membrane as a helical span at residues 1272–1292 (IIVSIVICSVLLLLSVVALFV). The Cytoplasmic segment spans residues 1293–1925 (FCTKSRRAER…DNIYECYSEA (633 aa)).

The protein belongs to the plexin family. In terms of assembly, interacts with NRP1 and SEMA4A. Interacts with SH3BP1; they dissociate upon SEMA3E binding to PLXND1 allowing SH3BP1 to transduce downstream signal through RAC1 inactivation. As to expression, detected at low levels in heart, placenta, lung, skeletal muscle, kidney, thymus and liver. Detected at very low levels in brain, colon, spleen, small intestine and peripheral blood leukocytes.

It is found in the cell membrane. It localises to the cell projection. The protein resides in the lamellipodium membrane. Cell surface receptor for SEMA4A and for class 3 semaphorins, such as SEMA3A, SEMA3C and SEMA3E. Plays an important role in cell-cell signaling, and in regulating the migration of a wide spectrum of cell types. Regulates the migration of thymocytes in the medulla. Regulates endothelial cell migration. Plays an important role in ensuring the specificity of synapse formation. Required for normal development of the heart and vasculature. Mediates anti-angiogenic signaling in response to SEMA3E. The sequence is that of Plexin-D1 (PLXND1) from Homo sapiens (Human).